Reading from the N-terminus, the 132-residue chain is Small ribosomal subunit protein uS9 (132 aa).

This sequence belongs to the universal ribosomal protein uS9 family.

This Mycoplasma pneumoniae (strain ATCC 29342 / M129 / Subtype 1) (Mycoplasmoides pneumoniae) protein is Small ribosomal subunit protein uS9 (rpsI).